Reading from the N-terminus, the 258-residue chain is Type III pantothenate kinase (258 aa).

7–14 (DVGNTRLK) is a binding site for ATP. Substrate is bound by residues Y96 and 103 to 106 (GADR). D105 (proton acceptor) is an active-site residue. Residue T133 participates in ATP binding. T183 lines the substrate pocket.

It belongs to the type III pantothenate kinase family. In terms of assembly, homodimer. It depends on NH4(+) as a cofactor. The cofactor is K(+).

The protein localises to the cytoplasm. The enzyme catalyses (R)-pantothenate + ATP = (R)-4'-phosphopantothenate + ADP + H(+). It functions in the pathway cofactor biosynthesis; coenzyme A biosynthesis; CoA from (R)-pantothenate: step 1/5. Functionally, catalyzes the phosphorylation of pantothenate (Pan), the first step in CoA biosynthesis. This is Type III pantothenate kinase from Acidovorax ebreus (strain TPSY) (Diaphorobacter sp. (strain TPSY)).